Reading from the N-terminus, the 291-residue chain is Elongation factor Ts (291 aa).

Residues 79–82 are involved in Mg(2+) ion dislocation from EF-Tu; the sequence is TDFV.

It belongs to the EF-Ts family.

It localises to the cytoplasm. Functionally, associates with the EF-Tu.GDP complex and induces the exchange of GDP to GTP. It remains bound to the aminoacyl-tRNA.EF-Tu.GTP complex up to the GTP hydrolysis stage on the ribosome. This Anaplasma marginale (strain St. Maries) protein is Elongation factor Ts.